Here is a 551-residue protein sequence, read N- to C-terminus: mRNA cap guanine-N(7) methyltransferase (551 aa).

Residues 1–10 show a composition bias toward polar residues; it reads MENRSSSGTP. The disordered stretch occupies residues 1–152; the sequence is MENRSSSGTP…DRETLRRRQE (152 aa). 2 stretches are compositionally biased toward basic and acidic residues: residues 48–76 and 141–152; these read VTEE…EERH and LVDRETLRRRQE. One can recognise an mRNA cap 0 methyltransferase domain in the interval 194 to 551; sequence SKIKGLRSFN…FYHAFCFYKV (358 aa). 203-204 serves as a coordination point for mRNA; the sequence is NN. Residues Lys-207, Gly-250, Asp-274, Asp-312, 355–357, and Tyr-360 each bind S-adenosyl-L-methionine; that span reads MFA. The tract at residues 407–430 is disordered; that stretch reads KAREEQEKKEKSDEAPEDGEVEED. The segment covering 408–420 has biased composition (basic and acidic residues); that stretch reads AREEQEKKEKSDE. The span at 421-430 shows a compositional bias: acidic residues; sequence APEDGEVEED.

It belongs to the class I-like SAM-binding methyltransferase superfamily. mRNA cap 0 methyltransferase family.

It is found in the nucleus. It carries out the reaction a 5'-end (5'-triphosphoguanosine)-ribonucleoside in mRNA + S-adenosyl-L-methionine = a 5'-end (N(7)-methyl 5'-triphosphoguanosine)-ribonucleoside in mRNA + S-adenosyl-L-homocysteine. In terms of biological role, responsible for methylating the 5'-cap structure of mRNAs. The sequence is that of mRNA cap guanine-N(7) methyltransferase (abd1) from Aspergillus clavatus (strain ATCC 1007 / CBS 513.65 / DSM 816 / NCTC 3887 / NRRL 1 / QM 1276 / 107).